The following is a 424-amino-acid chain: MTDRCLASINAALTDSDPAIAGLIDQERQRQETHLELIASENFTSQAVMQAQGSVLTNKYAEGLPHKRYYGGCEHVDAIEELAIERARRLFGAAWANVQPHSGAQANFAVFLALLQPGDTIMGMDLSHGGHLTHGSPVNVSGKWFKVVHYGVEPDSQQLDMEAVRQLALKERPQLIICGYSAYPRTIDFAAFRSIADEVGAYLLADMAHIAGLVAAGVHPSPIAHCDVVTTTTHKTLRGPRGGLILCRDADFGRKFDKAVFPGSQGGPLEHVIAAKAVALGEALQPEFHAYSCQVVANAQVLAGRIQERGIAVVSGGTDNHLVLLDLRSIGMTGKVADLLVSDVNITANKNTVPFDPESPFVTSGLRLGTAALTTRGFDEEAFREVADVIADRLLKPQDESIKAQCLERVRQLCGRFPLYRGSL.

(6S)-5,6,7,8-tetrahydrofolate-binding positions include Leu-126 and 130-132 (GHL). The residue at position 235 (Lys-235) is an N6-(pyridoxal phosphate)lysine. Residue 359-361 (SPF) participates in (6S)-5,6,7,8-tetrahydrofolate binding.

This sequence belongs to the SHMT family. In terms of assembly, homodimer. Requires pyridoxal 5'-phosphate as cofactor.

The protein localises to the cytoplasm. It catalyses the reaction (6R)-5,10-methylene-5,6,7,8-tetrahydrofolate + glycine + H2O = (6S)-5,6,7,8-tetrahydrofolate + L-serine. It functions in the pathway one-carbon metabolism; tetrahydrofolate interconversion. The protein operates within amino-acid biosynthesis; glycine biosynthesis; glycine from L-serine: step 1/1. In terms of biological role, catalyzes the reversible interconversion of serine and glycine with tetrahydrofolate (THF) serving as the one-carbon carrier. This reaction serves as the major source of one-carbon groups required for the biosynthesis of purines, thymidylate, methionine, and other important biomolecules. Also exhibits THF-independent aldolase activity toward beta-hydroxyamino acids, producing glycine and aldehydes, via a retro-aldol mechanism. The chain is Serine hydroxymethyltransferase from Prochlorococcus marinus (strain MIT 9303).